The following is a 160-amino-acid chain: Protein cornichon homolog 2 (160 aa).

Topologically, residues 1–10 (MAFTFAAFCY) are cytoplasmic. A helical membrane pass occupies residues 11-31 (MLTLVLCAALIFFVIWQIIAF). Topologically, residues 32–72 (DELRTDFKNPIDQSNPTRARERILNIERICNLLRRLVVPEY) are lumenal. The helical transmembrane segment at 73 to 93 (SIHGLFCLMFMCAGEWVTLGL) threads the bilayer. At 94-138 (NIPLLLYHLWRFFHRPADGSEVMYDPVSVMNADILNYCQKESWCK) the chain is on the cytoplasmic side. The helical transmembrane segment at 139–159 (LGFYLLSFFYYLYSMVYALVS) threads the bilayer. Position 160 (Phe160) is a topological domain, lumenal.

The protein belongs to the cornichon family.

It localises to the membrane. Functionally, regulates the trafficking and gating properties of AMPA-selective glutamate receptors (AMPARs). This is Protein cornichon homolog 2 (cnih2) from Danio rerio (Zebrafish).